Consider the following 716-residue polypeptide: Interleukin-31 receptor subunit alpha (716 aa).

The signal sequence occupies residues 1 to 18 (MWTLALWAFSFLCKFSLA). Over 19–499 (VLPTKPENIS…TNGVRINFKT (481 aa)) the chain is Extracellular. Fibronectin type-III domains are found at residues 23-115 (KPEN…IAKT), 117-211 (PPII…TMEE), 213-304 (PHVL…ILRI), 305-403 (PDVH…QAYA), and 408-502 (PLKG…TLSI). Residues N36, N48, and N64 are each glycosylated (N-linked (GlcNAc...) asparagine). N-linked (GlcNAc...) asparagine glycosylation is present at N382. A helical membrane pass occupies residues 500 to 520 (LSISVFEIVLLTSLVGGGLLL). The Cytoplasmic portion of the chain corresponds to 521 to 716 (LSIKTVTFGL…NIPEHSKGEV (196 aa)). 2 disordered regions span residues 622-641 (EYVT…FKEP) and 648-696 (ASED…LKNS). Polar residues predominate over residues 670-679 (QPSSSCQSPG).

This sequence belongs to the type I cytokine receptor family. Type 2 subfamily. Heterodimer with OSMR. Interacts with JAK1 and STAT3. In terms of processing, N-glycosylated. In terms of tissue distribution, expressed in a subset of dorsal root ganglia neurons. Expressed in spinal cord and trigeminal ganglion (at protein level). Expressed in skin, testis, bone marrow and thymus.

Its subcellular location is the cell membrane. The protein localises to the presynaptic cell membrane. The protein resides in the cell projection. It localises to the axon. In terms of biological role, associates with OSMR to form the interleukin-31 receptor which activates STAT3 and to a lower extent STAT1 and STAT5. May function in skin immunity. Mediates IL31-induced itch, probably in a manner dependent on cation channels TRPA1 and TRPV1. Positively regulates numbers and cycling status of immature subsets of myeloid progenitor cells in bone marrow in vivo and enhances myeloid progenitor cell survival in vitro. The sequence is that of Interleukin-31 receptor subunit alpha (Il31ra) from Mus musculus (Mouse).